Here is a 437-residue protein sequence, read N- to C-terminus: UDP-N-acetylmuramate--L-alanine ligase (437 aa).

ATP is bound at residue 108 to 114 (GAHGKTS).

Belongs to the MurCDEF family.

It localises to the cytoplasm. The catalysed reaction is UDP-N-acetyl-alpha-D-muramate + L-alanine + ATP = UDP-N-acetyl-alpha-D-muramoyl-L-alanine + ADP + phosphate + H(+). It functions in the pathway cell wall biogenesis; peptidoglycan biosynthesis. In terms of biological role, cell wall formation. In Lysinibacillus sphaericus (strain C3-41), this protein is UDP-N-acetylmuramate--L-alanine ligase.